Here is a 207-residue protein sequence, read N- to C-terminus: NADH-quinone oxidoreductase subunit A (207 aa).

Helical transmembrane passes span 6-26, 62-82, and 87-107; these read WSAI…LVVP, LVAI…AYAV, and AGWL…IGLV.

Belongs to the complex I subunit 3 family. NDH-1 is composed of 14 different subunits. Subunits NuoA, H, J, K, L, M, N constitute the membrane sector of the complex.

It is found in the cell inner membrane. The catalysed reaction is a quinone + NADH + 5 H(+)(in) = a quinol + NAD(+) + 4 H(+)(out). In terms of biological role, NDH-1 shuttles electrons from NADH, via FMN and iron-sulfur (Fe-S) centers, to quinones in the respiratory chain. The immediate electron acceptor for the enzyme in this species is believed to be ubiquinone. Couples the redox reaction to proton translocation (for every two electrons transferred, four hydrogen ions are translocated across the cytoplasmic membrane), and thus conserves the redox energy in a proton gradient. The protein is NADH-quinone oxidoreductase subunit A of Psychrobacter arcticus (strain DSM 17307 / VKM B-2377 / 273-4).